The sequence spans 500 residues: NAD(P)H-quinone oxidoreductase chain 4, chloroplastic (500 aa).

The next 14 membrane-spanning stretches (helical) occupy residues phenylalanine 4 to leucine 24, tyrosine 35 to phenylalanine 55, isoleucine 87 to valine 107, phenylalanine 113 to serine 130, leucine 134 to methionine 154, phenylalanine 167 to leucine 187, isoleucine 211 to histidine 231, histidine 242 to valine 262, alanine 272 to alanine 292, isoleucine 305 to aspartate 325, glycine 330 to glycine 350, leucine 386 to threonine 406, isoleucine 416 to methionine 436, and leucine 462 to valine 482.

This sequence belongs to the complex I subunit 4 family.

The protein localises to the plastid. The protein resides in the chloroplast thylakoid membrane. The enzyme catalyses a plastoquinone + NADH + (n+1) H(+)(in) = a plastoquinol + NAD(+) + n H(+)(out). It catalyses the reaction a plastoquinone + NADPH + (n+1) H(+)(in) = a plastoquinol + NADP(+) + n H(+)(out). The protein is NAD(P)H-quinone oxidoreductase chain 4, chloroplastic of Arabis hirsuta (Hairy rock-cress).